Consider the following 471-residue polypeptide: D-hydantoinase (471 aa).

Residues H58, H60, and K150 each contribute to the Zn(2+) site. At K150 the chain carries N6-carboxylysine. Y155 is a binding site for substrate. H183 and H239 together coordinate Zn(2+). S288 contacts substrate. D315 provides a ligand contact to Zn(2+). N337 is a binding site for substrate.

This sequence belongs to the metallo-dependent hydrolases superfamily. Hydantoinase/dihydropyrimidinase family. As to quaternary structure, homotetramer. Zn(2+) is required as a cofactor. It depends on Ni(2+) as a cofactor. The cofactor is Co(2+). Mn(2+) serves as cofactor. In terms of processing, carboxylation allows a single lysine to coordinate two zinc ions.

Its activity is regulated as follows. Completely inhibited by p-chloromercuribenzoate and partially inhibited by metal chelating agents. Functionally, catalyzes the stereospecific hydrolysis of the cyclic amide bond of D-hydantoin. Has no activity on dihydropyrimidines. The polypeptide is D-hydantoinase (Geobacillus stearothermophilus (Bacillus stearothermophilus)).